Reading from the N-terminus, the 616-residue chain is Protein decapentaplegic (616 aa).

The signal sequence occupies residues 1 to 23 (MRAWILLLAVLATSQPIVQVAST). A propeptide spanning residues 24-474 (EDTSISQRFI…DGRHKARSIR (451 aa)) is cleaved from the precursor. A disordered region spans residues 80-188 (SDSDSDNNNN…TSTESHQSPI (109 aa)). A compositionally biased stretch (low complexity) spans 86–105 (NNNNNYKNRNNNNNNLNKGP). Residues 106-115 (RNNKNKGNKH) are compositionally biased toward basic residues. The segment covering 116–139 (SKSDANRQFNEVHKPRTDQLENSK) has biased composition (basic and acidic residues). An N-linked (GlcNAc...) asparagine glycan is attached at Asn-147. The segment covering 173–188 (ATTTALTSTESHQSPI) has biased composition (polar residues). N-linked (GlcNAc...) asparagine glycans are attached at residues Asn-360 and Asn-395. Residues 470-512 (ARSIRDVSGGGGGGGGAGEGGKGNGGGRNRRHQRRPARRKNHE) form a disordered region. A compositionally biased stretch (gly residues) spans 477-496 (SGGGGGGGGAGEGGKGNGGG). Residues 497–509 (RNRRHQRRPARRK) show a composition bias toward basic residues. 3 cysteine pairs are disulfide-bonded: Cys-515-Cys-581, Cys-544-Cys-613, and Cys-548-Cys-615. An N-linked (GlcNAc...) asparagine glycan is attached at Asn-557.

The protein belongs to the TGF-beta family. In terms of assembly, heterodimers of scw/dpp are the active subunit, dpp/dpp homodimers elicit a basal response and scw/scw homodimers alone are ineffective in specifying a dorsal pattern. As to expression, expressed in the imaginal discs associated with establishment of the proximal-distal axis of the appendages, and midgut mesoderm.

It localises to the secreted. In terms of biological role, acts as an extracellular morphogen to establish at least two cellular response thresholds within the dorsal half of the drosophila embryo. Required for the proper development of the embryonic dorsal hypoderm, for viability of larvae and for cell viability of the epithelial cells in the imaginal disks. Acts together with scw. In Drosophila pseudoobscura pseudoobscura (Fruit fly), this protein is Protein decapentaplegic (dpp).